The sequence spans 413 residues: Chloramphenicol efflux pump MT0201 (413 aa).

12 helical membrane passes run 23–43 (LSVL…PVGA), 55–75 (VVLV…TTVP), 89–109 (LVVS…APNF), 110–130 (AVLA…WAVI), 150–170 (IYIG…AMSL), 176–196 (LAAV…RLAL), 226–246 (VLTM…VVII), 256–276 (NLAW…PLVA), 286–306 (AVIV…ALAF), 312–332 (AATA…ATAV), 353–373 (GLYV…GGLL), and 378–398 (LAMM…GMTV).

It belongs to the major facilitator superfamily.

The protein localises to the cell membrane. Active efflux pump that plays an important role in chloramphenicol resistance. The protein is Chloramphenicol efflux pump MT0201 of Mycobacterium tuberculosis (strain CDC 1551 / Oshkosh).